A 349-amino-acid polypeptide reads, in one-letter code: Core protein VP7 (349 aa).

An N-linked (GlcNAc...) asparagine; by host glycan is attached at Asn45.

Belongs to the orbivirus VP7 family. In terms of assembly, homotrimer.

It is found in the virion. Major structural core protein; binds to structural protein VP3. Constitutes the surface of the AHSV core. This is Core protein VP7 (Segment-7) from Camelus dromedarius (Dromedary).